The following is a 287-amino-acid chain: Putative S-adenosyl-L-methionine-dependent methyltransferase SACE_1742 (287 aa).

Residues aspartate 119 and 148–149 (DL) contribute to the S-adenosyl-L-methionine site.

It belongs to the UPF0677 family.

Its function is as follows. Exhibits S-adenosyl-L-methionine-dependent methyltransferase activity. This is Putative S-adenosyl-L-methionine-dependent methyltransferase SACE_1742 from Saccharopolyspora erythraea (strain ATCC 11635 / DSM 40517 / JCM 4748 / NBRC 13426 / NCIMB 8594 / NRRL 2338).